The primary structure comprises 387 residues: GTP-binding protein 10 (387 aa).

One can recognise an Obg domain in the interval 13-148 (GNFIDNLRLF…RVIHLDLKLI (136 aa)). The OBG-type G domain maps to 149-344 (ADIGLVGFPN…LKNCIRKSLD (196 aa)). GTP contacts are provided by residues 155–162 (GFPNAGKS), 202–206 (DLPGL), and 278–281 (NKMD).

It belongs to the TRAFAC class OBG-HflX-like GTPase superfamily. OBG GTPase family.

It is found in the nucleus. The protein localises to the nucleolus. In terms of biological role, may be involved in the ribosome maturation process. In Bos taurus (Bovine), this protein is GTP-binding protein 10 (GTPBP10).